Consider the following 371-residue polypeptide: Peptide chain release factor 2 (371 aa).

Q253 is modified (N5-methylglutamine).

It belongs to the prokaryotic/mitochondrial release factor family. In terms of processing, methylated by PrmC. Methylation increases the termination efficiency of RF2.

It is found in the cytoplasm. Peptide chain release factor 2 directs the termination of translation in response to the peptide chain termination codons UGA and UAA. This Mycobacterium sp. (strain KMS) protein is Peptide chain release factor 2.